A 131-amino-acid polypeptide reads, in one-letter code: Meiotically up-regulated gene 115 protein (131 aa).

It is found in the mitochondrion. The protein localises to the nucleus. In terms of biological role, has a role in meiosis. This Schizosaccharomyces pombe (strain 972 / ATCC 24843) (Fission yeast) protein is Meiotically up-regulated gene 115 protein (mug115).